Reading from the N-terminus, the 132-residue chain is Replication enhancer protein (132 aa).

The protein belongs to the geminiviridae replication enhancer protein family. As to quaternary structure, homooligomer. Interacts with the replication-associated protein (REP). Interacts with host proliferating cell nuclear antigen (PCNA). Interacts with host retinoblastoma-related protein 1 (RBR1), and may thereby deregulate the host cell cycle. Oligomerization and interaction with PCNA are necessary for optimal replication enhancement.

Functionally, increases viral DNA accumulation. Enhances infectivity and symptom expression. This chain is Replication enhancer protein, found in Pepper huasteco yellow vein virus (PHYVV).